The primary structure comprises 766 residues: MIWRRRAGAELSSLMALWEWIVLSLHCWVLAVAAVSDQHATSPFDWLLSDKGPFHRSQEYTDFVDRSRQGFSTRYKIYREFGRWKVNNLAVERRNFLGSPLPLAPEFFRNIRLLGRRPTLQQITENLIKKYGTHFLLSATLGGEESLTIFVDKRKLSKRPEGSETSTNSSSVTLETLHQLAASYFIDRDSTLRRLHHIQIASTAIKVTETRTGPLGCSNYDNLDSVSSVLVQSPENKIQLQGLQVLLPDYLQERFVQAALSYIACNSEGEFICKENDCWCLCGPKFPECNCPSMDIQAMEENLLRITETWKAYNSDFEDSDEFKFFMKRLPMNYFLNTSTIMHLWTMDSNFQRRYEQLENSMKQLFLKAHRIVHKLFSLSKRCHKQPLISLPRQRTSTYWLTRIQSFLYCNENGLLGSFSEETHSCTCPNDQVVCTAFLPCTVGDASACLTCAPDNRTRCGTCNTGYMLSQGLCKPEVAESTDHYIGFETDLQDLEMKYLLQKTDRRIEVHAIFISNDMRLNSWFDPSWRKRMLLTLKSNKYKSSLVHMILGLSLQICLTKNSTLEPVLAVYINPFGGSHSESWFMPVSESSFPDWERTKLDLPLQCYNWTLTLGNKWKTFFETVHIYLRSRIKANGPNSNESIYYEPLEFIDPSRNLGYMKINNIQVFGYSMHFDPEAIRDLILQLDYPYTQGSQDSALLQLLEIRDRVNKLSPPGQRRLDLFSCLLRHRLKLSTSEVVRIQSALQAFNAKLPNTVDYDTTKLCS.

The N-terminal stretch at 1 to 33 is a signal peptide; that stretch reads MIWRRRAGAELSSLMALWEWIVLSLHCWVLAVA. One can recognise an MACPF domain in the interval 74–264; the sequence is RYKIYREFGR…FVQAALSYIA (191 aa). N-linked (GlcNAc...) asparagine glycosylation is found at Asn168, Asn337, Asn456, Asn562, Asn609, and Asn641.

It belongs to the BRINP family. As to expression, expressed in olfactory bulb, cerebellum and neuronal layers in hippocampus.

It localises to the secreted. It is found in the mitochondrion. Inhibits neuronal cell proliferation by negative regulation of the cell cycle transition. Promotes pituitary gonadotrope cell proliferation, migration and invasion, when overexpressed. May play a role in cell pituitary tumor development. The sequence is that of BMP/retinoic acid-inducible neural-specific protein 3 (Brinp3) from Rattus norvegicus (Rat).